The following is a 358-amino-acid chain: Heterogeneous nuclear ribonucleoprotein A2 homolog 2 (358 aa).

2 consecutive RRM domains span residues 9 to 92 (RKLF…ESAK) and 100 to 179 (KKLF…LSKQ). Disordered regions lie at residues 182–217 (QDVQ…FRGG) and 333–358 (YGGG…RNRY). A compositionally biased stretch (gly residues) spans 193 to 217 (GNFGFGDSRGGGNFGSGPGGNFRGG). The tract at residues 309 to 352 (QQSSSYGPMKSGGNFGGNRSMGGPYGGGNYGPGNGSGASGGGGY) is nuclear targeting sequence.

The protein resides in the nucleus. In terms of biological role, forms complexes (ribonucleosomes) with at least 20 other different hnRNP and heterogeneous nuclear RNA in the nucleus. The polypeptide is Heterogeneous nuclear ribonucleoprotein A2 homolog 2 (Xenopus laevis (African clawed frog)).